The following is a 3033-amino-acid chain: MSTNPKPQRKTKRNTNRRPQDVKFPGGGQIVGGVYLLPRRGPRLGVRATRKTSERSQPRGRRQPIPKDRRSTGKSWGKPGYPWPLYGNEGCGWAGWLLSPRGSRPTWGPSDPRHRSRNLGRVIDTITCGFADLMGYIPVVGAPVGGVARALAHGVRVLEDGINYATRNLPGCSFSIFLLALLSCVTVPVSSVEIRNISTSYYATNDCSNNSITWQLTNAVLHLPGCVPCENDNGTLRCWIQVTPNVAVKHRGALTHNLRAHVDVIVMAATVCSALYVGDVCGAVMIVSQALIVSPERHNFTQECNCSIYQGHITGQRMAWDMMLNWSPTLTMILAYAARVPELVLEIVFGGHWGVVFGLAYFSMQGAWAKVIAILLLVAGVDATTYSTGATVGRTVGSFAGLFKLGAQQNVQLINTNGSWHINRTALNCNDSLHTGFMAALFYANKFNSSGCPERLSSCRGLDDFRIGWGTLEYETNVTNVEDMRPYCWHYPPKPCGIVPAQSVCGPVYCFTPSPVVVGTTDRQGVPTYNWGDNETDVFLLNSTRPPRGAWFGCTWMNGTGFTKTCGAPPCRIRKDFNSTLDLLCPTDCFRKHPDATYVKCGAGPWLTPRCLIDYPYRLWHYPCTVNFTIFKVRMYVGGVEHRFSAACNFTRGDRCRLEDRDRGQQSPLLHSTTEWAVLPCSFSDLPALSTGLLHLHQNIVDVQYLYGLSPAVTKYIVKWEWVVLLFLLLADARICACLWMLIILGQAEAALEKLIILHSASAASANGPLWFFIFFTAAWYLKGRVVPAATYSVLGLWSFLLLVLALPQQAYALDAAEQGELGLVILMIISIFTLTPAYKILLSRSVWWLSYMLVLAEAQVQQWVPPLEARGGRDGIIWVAVILHPHLVFEVTKWLLAILGSAYLLKASLLRVPYFVRAHALLRVCTLVRHLAGARYIQMLLITMGRWTGTYIYDHLSPLSTWAAQGLRDLAVAVEPVVFSPMEKKVIVWGAETVACGDILHGLPVSARLGREVLLGPADGYTSKGWKLLAPITAYTQQTRGLLGAIVVSLTGRDKNEQAGQVQVLSSVTQSFLGTSISGVLWTVYHGAGNKTLASPRGPVTQMYTSAEGDLVGWPSPPGTKSLDPCTCGAVDLYLVTRNADVIPVRRKDDRRGALLSPRPLSTLKGSSGGPVLCPRGHAVGLFRAAVCARGVAKSIDFIPVESLDIARRTPSFSDNSTPPAVPQTYQVGYLHAPTGSGKSTKVPAAYTSQGYKVLVLNPSVAATLGFGAYMSKAHGINPNIRTGVRTVTTGDSITYSTYGKFLADGGCSAGAYDIIICDECHSVDATTILGIGTVLDQAETAGVRLVVLATATPPGTVTTPHANIEEVALGHEGEIPFYGKAIPLASIKGGRHLIFCHSKKKCDELAAALRGMGVNAVAYYRGLDVSVIPTQGDVVVVATDALMTGYTGDFDSVIDCNVAVTQIVDFSLDPTFTITTQTVPQDAVSRSQRRGRTGRGRLGTYRYVSSGERPSGMFDSVVLCECYDAGAAWYELTPAETTVRLRAYFNTPGLPVCQDHLEFWEAVFTGLTHIDAHFLSQTKQGGDNFAYLTAYQATVCARAKAPPPSWDVMWKCLTRLKPTLTGPTPLLYRLGAVTNEITLTHPVTKYIATCMQADLEVMTSTWVLAGGVLAAVAAYCLATGCISIIGRIHLNDQVVVAPDKEILYEAFDEMEECASKAALIEEGQRMAEMLKSKILGLLQQATKQAQDIQPAMQSSWPKIEQFWARHMWNFISGIQYLAGLSTLPGNPAVASMMAFSAALTSPLPTSTTILLNIMGGWLASQIAPPAGATGFVVSGLVGAAVGSIGLGKILVDVLAGYGAGISGALVAFKIMSGEKPSVEDVVNLLPAILSPGALVVGVICAAILRRHVGQGEGAVQWMNRLIAFASRGNHVAPTHYVAESDASLRVTQVLSSLTITSLLRRLHAWITEDCPVPCSGSWLRDIWEWVCSILTDFKNWLSAKLLPKMPGLPFISCQKGYRGVWAGTGVMTTRCSCGANISGHVRLGTMKITGPKTCLNMWQGTFPINCYTEGPCVPKPPPNYKTAIWRVAASEYVEVTQHGSFSYVTGLTSDNLKVPCQVPAPEFFSWVDGVQIHRFAPTPGPFFRDEVTFTVGLNSLVVGSQLPCDPEPDTEVLASMLTDPSHITAETAARRLARGSPPSQASSSASQLSAPSLKATCTTHKTAYDCDMVDANLFMGGDVTRIESDSKVIVLDSLDSMTEVEDDREPSVPSEYLTRRRKFPPALPPWARPDYNPPVIETWKRPDYEPPTVLGCALPPTPQAPVPPPRRRRARVLTQDNVEGVLREMADKVLSPLQDTNDSGHSTGADTGGDSVQQPSGETAASDAGSLSSMPPLEGEPGDPDLEFEPARSAPPSEGECEVIDSDSKSWSTVSDQEDSVICCSMSYSWTGALITPCGPEEEKLPISPLSNSLMRFHNKVYSTTSRSASLRAKKVTFDRVQVLDAHYDSVLQDVKRAASKVSARLLSVEEACALTPPHSAKSRYGFGAKEVRSLSRGAVNHIRSVWEDLLEDQHTPIDTTAMAKNEVFCIDPAKGGKKPARLIVYPDLGVRVCEKMALYDIAQKLPKAIMGPSYGFQYSPAERVDFLLKAWGSKKDPMGFSYDTRCFDSTVTERDIRTEESIYQACSLPQEARTVIHSITERLYVGGPMTNSKGQSCGYRRCRASGVFTTSMGNTMTCYIKALAACKAAGIVDPTMLVCGDDLVVISESQGNEEDERNLRAFTEAMTRYSAPPGDLPRPEYDLELITSCSSNVSVALDSRGRRRYFLTRDPTTPITRAAWETVRHSPVNSWLGNIIQYAPTIWVRMVIMTHFFSILLAQDTLNQNLNFEMYGAVYSVNPLDLPAIIERLHGLDAFSLHTYSPHELSRVAATLRKLGAPPLRAWKSRARAVRASLIIQGGRAATCGRYLFNWAVKTKLKLTPLPEASRLDLSGWFTVGAGGGDIFHSVSHARPRLLLLCLLLLSVGVGIFLLPAR.

An N-acetylserine; by host modification is found at serine 2. Positions 2–23 (STNPKPQRKTKRNTNRRPQDVK) are interaction with STAT1. The tract at residues 2-58 (STNPKPQRKTKRNTNRRPQDVKFPGGGQIVGGVYLLPRRGPRLGVRATRKTSERSQP) is interaction with EIF2AK2/PKR. Residues 2–59 (STNPKPQRKTKRNTNRRPQDVKFPGGGQIVGGVYLLPRRGPRLGVRATRKTSERSQPR) are interaction with DDX3X. A disordered region spans residues 2-75 (STNPKPQRKT…PKDRRSTGKS (74 aa)). 2 consecutive short sequence motifs (nuclear localization signal) follow at residues 5–13 (PKPQRKTKR) and 38–43 (PRRGPR). Residues 7-16 (PQRKTKRNTN) show a composition bias toward basic residues. The span at 32-47 (GGVYLLPRRGPRLGVR) shows a compositional bias: low complexity. Serine 53 is subject to Phosphoserine; by host. 2 consecutive short sequence motifs (nuclear localization signal) follow at residues 58–64 (PRGRRQP) and 66–71 (PKDRRS). 2 positions are modified to phosphoserine; by host: serine 99 and serine 116. The segment at 112-152 (PRHRSRNLGRVIDTITCGFADLMGYIPVVGAPVGGVARALA) is important for endoplasmic reticulum and mitochondrial localization. An interaction with APOA2 region spans residues 122–173 (VIDTITCGFADLMGYIPVVGAPVGGVARALAHGVRVLEDGINYATRNLPGCS). The segment at 164 to 167 (YATR) is important for lipid droplets localization. The propeptide at 178 to 191 (LLALLSCVTVPVSS) is ER anchor for the core protein, removed in mature form by host signal peptidase. Topologically, residues 190-358 (SSVEIRNIST…FGGHWGVVFG (169 aa)) are lumenal. N-linked (GlcNAc...) asparagine; by host glycans are attached at residues asparagine 196 and asparagine 209. An important for fusion region spans residues 265 to 296 (IVMAATVCSALYVGDVCGAVMIVSQALIVSPE). Residue asparagine 305 is glycosylated (N-linked (GlcNAc...) asparagine; by host). A helical transmembrane segment spans residues 359-379 (LAYFSMQGAWAKVIAILLLVA). Topologically, residues 380-729 (GVDATTYSTG…WEWVVLLFLL (350 aa)) are lumenal. The HVR1 stretch occupies residues 385-412 (TYSTGATVGRTVGSFAGLFKLGAQQNVQ). Residues asparagine 417, asparagine 423, and asparagine 430 are each glycosylated (N-linked (GlcNAc...) (high mannose) asparagine; by host). 4 disulfide bridges follow: cysteine 429-cysteine 554, cysteine 452-cysteine 459, cysteine 488-cysteine 496, and cysteine 505-cysteine 510. An N-linked (GlcNAc...) asparagine; by host glycan is attached at asparagine 448. Positions 475–480 (ETNVTN) are HVR2. Asparagine 477 is a glycosylation site (N-linked (GlcNAc...) asparagine; by host). The segment at 482–495 (EDMRPYCWHYPPKP) is CD81-binding 1. Asparagine 534 carries an N-linked (GlcNAc...) asparagine; by host glycan. A CD81-binding 2 region spans residues 546–553 (PPRGAWFG). Asparagine 558 is a glycosylation site (N-linked (GlcNAc...) asparagine; by host). Cystine bridges form between cysteine 566–cysteine 571, cysteine 585–cysteine 589, cysteine 601–cysteine 624, and cysteine 611–cysteine 648. Asparagine 627 and asparagine 649 each carry an N-linked (GlcNAc...) (high mannose) asparagine; by host glycan. Cysteine 656 and cysteine 681 are disulfide-bonded. The tract at residues 664 to 675 (GQQSPLLHSTTE) is PKR/eIF2-alpha phosphorylation homology domain (PePHD). Residues 730–750 (LADARICACLWMLIILGQAEA) traverse the membrane as a helical segment. The Lumenal portion of the chain corresponds to 751–761 (ALEKLIILHSA). A helical transmembrane segment spans residues 762–782 (SAASANGPLWFFIFFTAAWYL). Topologically, residues 783–786 (KGRV) are cytoplasmic. A helical membrane pass occupies residues 787 to 807 (VPAATYSVLGLWSFLLLVLAL). Residues 808-817 (PQQAYALDAA) are Lumenal-facing. The helical transmembrane segment at 818-838 (EQGELGLVILMIISIFTLTPA) threads the bilayer. Topologically, residues 839–885 (YKILLSRSVWWLSYMLVLAEAQVQQWVPPLEARGGRDGIIWVAVILH) are cytoplasmic. The helical transmembrane segment at 886 to 906 (PHLVFEVTKWLLAILGSAYLL) threads the bilayer. The Lumenal portion of the chain corresponds to 907–932 (KASLLRVPYFVRAHALLRVCTLVRHL). Residues 907–1030 (KASLLRVPYF…GYTSKGWKLL (124 aa)) form the Peptidase C18 domain. The protease NS2-3 stretch occupies residues 908–1210 (ASLLRVPYFV…PVESLDIARR (303 aa)). Cysteine 926 carries the S-palmitoyl cysteine; by host lipid modification. A helical membrane pass occupies residues 933 to 953 (AGARYIQMLLITMGRWTGTYI). An interaction with host SCPS1 region spans residues 933 to 953 (AGARYIQMLLITMGRWTGTYI). Topologically, residues 954 to 1661 (YDHLSPLSTW…CMQADLEVMT (708 aa)) are cytoplasmic. Catalysis depends on for protease NS2 activity; shared with dimeric partner residues histidine 956, glutamate 976, and cysteine 997. A Peptidase S29 domain is found at 1031–1212 (APITAYTQQT…ESLDIARRTP (182 aa)). Residues histidine 1087 and aspartate 1111 each act as charge relay system; for serine protease NS3 activity in the active site. 2 residues coordinate Zn(2+): cysteine 1127 and cysteine 1129. Serine 1169 serves as the catalytic Charge relay system; for serine protease NS3 activity. Zn(2+) contacts are provided by cysteine 1175 and histidine 1179. Residues 1221-1373 (PAVPQTYQVG…ANIEEVALGH (153 aa)) enclose the Helicase ATP-binding domain. 1234–1241 (APTGSGKS) is a binding site for ATP. Residues serine 1241 and glutamate 1321 each coordinate Mg(2+). The DECH box signature appears at 1320–1323 (DECH). The segment at 1490–1502 (QRRGRTGRGRLGT) is RNA-binding. A helical transmembrane segment spans residues 1662 to 1682 (STWVLAGGVLAAVAAYCLATG). Positions 1683–1694 (CISIIGRIHLND) are NS3-binding. Topologically, residues 1683–1809 (CISIIGRIHL…ALTSPLPTST (127 aa)) are cytoplasmic. Residues 1810–1830 (TILLNIMGGWLASQIAPPAGA) form a helical membrane-spanning segment. The Lumenal segment spans residues 1831–1832 (TG). The chain crosses the membrane as a helical span at residues 1833–1853 (FVVSGLVGAAVGSIGLGKILV). Position 1854 (aspartate 1854) is a topological domain, cytoplasmic. A helical transmembrane segment spans residues 1855–1875 (VLAGYGAGISGALVAFKIMSG). Over 1876–1885 (EKPSVEDVVN) the chain is Lumenal. The chain crosses the membrane as a helical span at residues 1886–1906 (LLPAILSPGALVVGVICAAIL). Residues 1907–1976 (RRHVGQGEGA…WITEDCPVPC (70 aa)) are Cytoplasmic-facing. Cysteine 1976 carries S-palmitoyl cysteine; by host lipidation. Residues 1977 to 2007 (SGSWLRDIWEWVCSILTDFKNWLSAKLLPKM) lie within the membrane without spanning it. At 2008-3012 (PGLPFISCQK…FHSVSHARPR (1005 aa)) the chain is on the cytoplasmic side. Cysteine 2015, cysteine 2033, cysteine 2035, and cysteine 2056 together coordinate Zn(2+). The tract at residues 2124-2212 (EFFSWVDGVQ…ASSSASQLSA (89 aa)) is FKBP8-binding. The interval 2124–2332 (EFFSWVDGVQ…PVPPPRRRRA (209 aa)) is transcriptional activation. Residues 2139-2143 (PTPGP) form an interaction with non-structural protein 4A region. The tract at residues 2192–2213 (RRLARGSPPSQASSSASQLSAP) is disordered. An interaction with host SKP2 region spans residues 2193–2460 (RLARGSPPSQ…ALITPCGPEE (268 aa)). Serine 2198, serine 2201, serine 2205, serine 2208, serine 2211, and serine 2214 each carry phosphoserine; by host. Positions 2198-2213 (SPPSQASSSASQLSAP) are enriched in low complexity. Residues 2214 to 2249 (SLKATCTTHKTAYDCDMVDANLFMGGDVTRIESDSK) form an ISDR region. The segment at 2214-2275 (SLKATCTTHK…REPSVPSEYL (62 aa)) is interaction with EIF2AK2/PKR. Residues 2249–2306 (KVIVLDSLDSMTEVEDDREPSVPSEYLTRRRKFPPALPPWARPDYNPPVIETWKRPDY) are NS4B-binding. Residues 2299 to 2377 (ETWKRPDYEP…DTGGDSVQQP (79 aa)) are V3. Positions 2322–2325 (APVP) match the SH3-binding motif. A Nuclear localization signal motif is present at residues 2327-2335 (PRRRRARVL). Lysine 2350 participates in a covalent cross-link: Glycyl lysine isopeptide (Lys-Gly) (interchain with G-Cter in ubiquitin). The interval 2354–2431 (PLQDTNDSGH…IDSDSKSWST (78 aa)) is disordered. Polar residues predominate over residues 2355-2391 (LQDTNDSGHSTGADTGGDSVQQPSGETAASDAGSLSS). Phosphoserine; by host occurs at positions 2471 and 2484. A RdRp catalytic domain is found at 2656–2774 (PMGFSYDTRC…ISESQGNEED (119 aa)). Residues aspartate 2662, aspartate 2760, and aspartate 2761 each coordinate Mg(2+). A helical membrane pass occupies residues 3013-3033 (LLLLCLLLLSVGVGIFLLPAR).

The protein belongs to the hepacivirus polyprotein family. Homooligomer. Interacts with E1 (via C-terminus). Interacts with the non-structural protein 5A. Interacts (via N-terminus) with host STAT1 (via SH2 domain); this interaction results in decreased STAT1 phosphorylation and ubiquitin-mediated proteasome-dependent STAT1 degradation, leading to decreased IFN-stimulated gene transcription. Interacts with host STAT3; this interaction constitutively activates STAT3. Interacts with host LTBR receptor. Interacts with host TNFRSF1A receptor and possibly induces apoptosis. Interacts with host HNRPK. Interacts with host YWHAE. Interacts with host UBE3A/E6AP. Interacts with host DDX3X. Interacts with host APOA2. Interacts with host RXRA protein. Interacts with host SP110 isoform 3/Sp110b; this interaction sequesters the transcriptional corepressor SP110 away from the nucleus. Interacts with host CREB3 nuclear transcription protein; this interaction triggers cell transformation. Interacts with host ACY3. Interacts with host C1QR1. Interacts with host RBM24; this interaction, which enhances the interaction of the mature core protein with 5'-UTR, may inhibit viral translation and favor replication. Interacts with host EIF2AK2/PKR; this interaction induces the autophosphorylation of EIF2AK2. Part of the viral assembly initiation complex composed of NS2, E1, E2, NS3, NS4A, NS5A and the mature core protein. As to quaternary structure, forms a heterodimer with envelope glycoprotein E2. Interacts with mature core protein. Interacts with protease NS2. The heterodimer E1/E2 interacts with host CLDN1; this interaction plays a role in viral entry into host cell. Interacts with host SPSB2 (via C-terminus). Part of the viral assembly initiation complex composed of NS2, E1, E2, NS3, NS4A, NS5A and the mature core protein. Interacts with host NEURL3; this interaction prevents E1 binding to glycoprotein E2. In terms of assembly, forms a heterodimer with envelope glycoprotein E1. Interacts with host CD81 and SCARB1 receptors; these interactions play a role in viral entry into host cell. Interacts with host EIF2AK2/PKR; this interaction inhibits EIF2AK2 and probably allows the virus to evade the innate immune response. Interacts with host CD209/DC-SIGN and CLEC4M/DC-SIGNR. Interact with host SPCS1; this interaction is essential for viral particle assembly. Interacts with protease NS2. The heterodimer E1/E2 interacts with host CLDN1; this interaction plays a role in viral entry into host cell. Part of the viral assembly initiation complex composed of NS2, E1, E2, NS3, NS4A, NS5A and the mature core protein. Interacts with host SLC3A2/4F2hc; the interaction may facilitate viral entry into host cell. Interacts with human PLSCR1. Homohexamer. Homoheptamer. Interacts with protease NS2. As to quaternary structure, homodimer. Interacts with host SPCS1; this interaction is essential for viral particle assembly. Interacts with envelope glycoprotein E1. Interacts with envelope glycoprotein E2. Interacts with viroporin p7. Interacts with serine protease/helicase NS3. Part of the replication complex composed of NS2, NS3, NS4A, NS4B, NS5A and the RNA-directed RNA polymerase embedded in an ER-derived membranous web. Part of the viral assembly initiation complex composed of NS2, E1, E2, NS3, NS4A, NS5A and the mature core protein. In terms of assembly, interacts with protease NS2. Interacts with non-structural protein 4A; this interaction stabilizes the folding of NS3 serine protease. NS3-NS4A interaction is essential for NS3 activation and allows membrane anchorage of the latter. NS3/NS4A complex also prevents phosphorylation of host IRF3, thus preventing the establishment of dsRNA induced antiviral state. Interacts with host MAVS; this interaction leads to the cleavage and inhibition of host MAVS. Interacts with host TICAM1; this interaction leads to the cleavage and inhibition of host TICAM1. Interacts with host TANK-binding kinase/TBK1; this interaction results in the inhibition of the association between TBK1 and IRF3, which leads to the inhibition of IRF3 activation. Interacts with host RBM24. Part of the replication complex composed of NS2, NS3, NS4A, NS4B, NS5A and the RNA-directed RNA polymerase embedded in an ER-derived membranous web. Part of the viral assembly initiation complex composed of NS2, E1, E2, NS3, NS4A, NS5A and the mature core protein. Interacts with NS3 serine protease; this interaction stabilizes the folding of NS3 serine protease. NS3-NS4A interaction is essential for NS3 activation and allows membrane anchorage of the latter. Interacts with non-structural protein 5A (via N-terminus). Part of the replication complex composed of NS2, NS3, NS4A, NS4B, NS5A and the RNA-directed RNA polymerase embedded in an ER-derived membranous web. Part of the viral assembly initiation complex composed of NS2, E1, E2, NS3, NS4A, NS5A and the mature core protein. As to quaternary structure, homomultimer. Interacts with non-structural protein NS5A. Interacts with host PLA2G4C; this interaction likely initiates the recruitment of replication complexes to lipid droplets. Interacts with host STING; this interaction disrupts the interaction between STING and TBK1 thereby suppressing the interferon signaling. Part of the replication complex composed of NS2, NS3, NS4A, NS4B, NS5A and the RNA-directed RNA polymerase embedded in an ER-derived membranous web. In terms of assembly, monomer. Homodimer; dimerization is required for RNA-binding. Interacts with the mature core protein. Interacts (via N-terminus) with non-structural protein 4A. Interacts with non-structural protein 4B. Interacts (via region D2) with RNA-directed RNA polymerase. Part of the viral assembly initiation complex composed of NS2, E1, E2, NS3, NS4A, NS5A and the mature core protein. Part of the replication complex composed of NS2, NS3, NS4A, NS4B, NS5A and the RNA-directed RNA polymerase embedded in an ER-derived membranous web. Interacts with host GRB2. Interacts with host BIN1. Interacts with host PIK3R1. Interacts with host SRCAP. Interacts with host FKBP8. Interacts (via C-terminus) with host VAPB (via MSP domain). Interacts with host EIF2AK2/PKR; this interaction leads to disruption of EIF2AK2 dimerization by NS5A and probably allows the virus to evade the innate immune response. Interacts (via N-terminus) with host PACSIN2 (via N-terminus); this interaction attenuates protein kinase C alpha-mediated phosphorylation of PACSIN2 by disrupting the interaction between PACSIN2 and PRKCA. Interacts (via N-terminus) with host SRC kinase (via SH2 domain). Interacts with most Src-family kinases. Interacts with host IFI27 and SKP2; promotes the ubiquitin-mediated proteasomal degradation of NS5A. Interacts with host GPS2. Interacts with host TNFRSF21; this interaction allows the modulation by the virus of JNK, p38 MAPK, STAT3, and Akt signaling pathways in a DR6-dependent manner. Interacts (via N-terminus) with host CIDEB (via N-terminus); this interaction seems to regulate the association of HCV particles with APOE. Interacts with host CHKA/Choline Kinase-alpha; CHKA bridges host PI4KA and NS5A and potentiates NS5A-stimulated PI4KA activity, which then facilitates the targeting of the ternary complex to the ER for viral replication. Interacts with host SPSB2 (via C-terminus); this interaction targets NS5A for ubiquitination and degradation. Interacts with host RAB18; this interaction may promote the association of NS5A and other replicase components with lipid droplets. Interacts (via region D2) with host PPIA/CYPA; the interaction stimulates RNA-binding ability of NS5A and is dependent on the peptidyl-prolyl cis-trans isomerase activity of PPIA/CYPA. Interacts with host TRIM14; this interaction induces the degradation of NS5A. Homooligomer. Interacts with non-structural protein 5A. Interacts with host VAPB. Interacts with host PRK2/PKN2. Interacts with host HNRNPA1 and SEPT6; these interactions facilitate viral replication. Part of the replication complex composed of NS2, NS3, NS4A, NS4B, NS5A and the RNA-directed RNA polymerase. Zn(2+) serves as cofactor. The cofactor is Mg(2+). Specific enzymatic cleavages in vivo yield mature proteins. The structural proteins, core, E1, E2 and p7 are produced by proteolytic processing by host signal peptidases. The core protein precursor is synthesized as a 23 kDa, which is retained in the ER membrane through the hydrophobic signal peptide. Cleavage by the signal peptidase releases the 21 kDa mature core protein. The cleavage of the core protein precursor occurs between aminoacids 176 and 188 but the exact cleavage site is not known. Some degraded forms of the core protein appear as well during the course of infection. The other proteins (p7, NS2, NS3, NS4A, NS4B, NS5A and NS5B) are cleaved by the viral proteases. Autoprocessing between NS2 and NS3 is mediated by the NS2 cysteine protease catalytic domain and regulated by the NS3 N-terminal domain. Post-translationally, phosphorylated by host PKC and PKA. In terms of processing, ubiquitinated; mediated by UBE3A and leading to core protein subsequent proteasomal degradation. Highly N-glycosylated. Post-translationally, palmitoylation is required for NS2/3 autoprocessing and E2 recruitment to membranes. In terms of processing, palmitoylated. This modification may play a role in its polymerization or in protein-protein interactions. Phosphorylated on serines in a basal form termed p56. p58 is a hyperphosphorylated form of p56. p56 and p58 coexist in the cell in roughly equivalent amounts. Hyperphosphorylation is dependent on the presence of NS4A. Host CSNK1A1/CKI-alpha or RPS6KB1 kinases may be responsible for NS5A phosphorylation. Post-translationally, tyrosine phosphorylation is essential for the interaction with host SRC. In terms of processing, ubiquitinated. Ubiquitination, most probably at Lys-2350, mediated by host IFI27 and SKP2 leads to proteasomal degradation, restricting viral infection. Ubiquitination by host TRIM22 leads to interruption of viral replication. The N-terminus is phosphorylated by host PRK2/PKN2.

Its subcellular location is the host endoplasmic reticulum membrane. The protein resides in the host mitochondrion membrane. It localises to the virion. The protein localises to the host cytoplasm. It is found in the host nucleus. Its subcellular location is the host lipid droplet. The protein resides in the virion membrane. It localises to the host mitochondrion. The protein localises to the host cell membrane. It is found in the host perinuclear region. The enzyme catalyses Hydrolysis of four peptide bonds in the viral precursor polyprotein, commonly with Asp or Glu in the P6 position, Cys or Thr in P1 and Ser or Ala in P1'.. The catalysed reaction is a ribonucleoside 5'-triphosphate + H2O = a ribonucleoside 5'-diphosphate + phosphate + H(+). It carries out the reaction ATP + H2O = ADP + phosphate + H(+). It catalyses the reaction RNA(n) + a ribonucleoside 5'-triphosphate = RNA(n+1) + diphosphate. Inhibited by the antiviral drug hexamethylene amiloride. Inhibition by amantadine appears to be genotype-dependent. Also inhibited by long-alkyl-chain iminosugar derivatives. Its activity is regulated as follows. Activity is up-regulated by PRK2/PKN2-mediated phosphorylation. Its function is as follows. Packages viral RNA to form a viral nucleocapsid, and promotes virion budding. Participates in the viral particle production as a result of its interaction with the non-structural protein 5A. Binds RNA and may function as a RNA chaperone to induce the RNA structural rearrangements taking place during virus replication. Modulates viral translation initiation by interacting with viral IRES and 40S ribosomal subunit. Affects various cell signaling pathways, host immunity and lipid metabolism. Prevents the establishment of cellular antiviral state by blocking the interferon-alpha/beta (IFN-alpha/beta) and IFN-gamma signaling pathways and by blocking the formation of phosphorylated STAT1 and promoting ubiquitin-mediated proteasome-dependent degradation of STAT1. Activates STAT3 leading to cellular transformation. Regulates the activity of cellular genes, including c-myc and c-fos. May repress the promoter of p53, and sequester CREB3 and SP110 isoform 3/Sp110b in the cytoplasm. Represses cell cycle negative regulating factor CDKN1A, thereby interrupting an important check point of normal cell cycle regulation. Targets transcription factors involved in the regulation of inflammatory responses and in the immune response: suppresses TNF-induced NF-kappa-B activation, and activates AP-1. Binds to dendritic cells (DCs) via C1QR1, resulting in down-regulation of T-lymphocytes proliferation. Alters lipid metabolism by interacting with hepatocellular proteins involved in lipid accumulation and storage. Induces up-regulation of FAS promoter activity, and thereby contributes to the increased triglyceride accumulation in hepatocytes (steatosis). In terms of biological role, forms a heterodimer with envelope glycoprotein E2, which mediates virus attachment to the host cell, virion internalization through clathrin-dependent endocytosis and fusion with host membrane. Fusion with the host cell is most likely mediated by both E1 and E2, through conformational rearrangements of the heterodimer required for fusion rather than a classical class II fusion mechanism. E1/E2 heterodimer binds host apolipoproteins such as APOB and ApoE thereby forming a lipo-viro-particle (LVP). APOE associated to the LVP allows the initial virus attachment to cell surface receptors such as the heparan sulfate proteoglycans (HSPGs), syndecan-1 (SDC1), syndecan-1 (SDC2), the low-density lipoprotein receptor (LDLR) and scavenger receptor class B type I (SCARB1). The cholesterol transfer activity of SCARB1 allows E2 exposure and binding of E2 to SCARB1 and the tetraspanin CD81. E1/E2 heterodimer binding on CD81 activates the epithelial growth factor receptor (EGFR) signaling pathway. Diffusion of the complex E1-E2-EGFR-SCARB1-CD81 to the cell lateral membrane allows further interaction with Claudin 1 (CLDN1) and occludin (OCLN) to finally trigger HCV entry. Functionally, forms a heterodimer with envelope glycoprotein E1, which mediates virus attachment to the host cell, virion internalization through clathrin-dependent endocytosis and fusion with host membrane. Fusion with the host cell is most likely mediated by both E1 and E2, through conformational rearrangements of the heterodimer required for fusion rather than a classical class II fusion mechanism. The interaction between envelope glycoprotein E2 and host apolipoprotein E/APOE allows the proper assembly, maturation and infectivity of the viral particles. This interaction is probably promoted via the up-regulation of cellular autophagy by the virus. E1/E2 heterodimer binds host apolipoproteins such as APOB and APOE thereby forming a lipo-viro-particle (LVP). APOE associated to the LVP allows the initial virus attachment to cell surface receptors such as the heparan sulfate proteoglycans (HSPGs), syndecan-1 (SDC1), syndecan-1 (SDC2), the low-density lipoprotein receptor (LDLR) and scavenger receptor class B type I (SCARB1). The cholesterol transfer activity of SCARB1 allows E2 exposure and binding of E2 to SCARB1 and the tetraspanin CD81. E1/E2 heterodimer binding on CD81 activates the epithelial growth factor receptor (EGFR) signaling pathway. Diffusion of the complex E1-E2-EGFR-SCARB1-CD81 to the cell lateral membrane allows further interaction with Claudin 1 (CLDN1) and occludin (OCLN) to finally trigger HCV entry. Inhibits host EIF2AK2/PKR activation, preventing the establishment of an antiviral state. Viral ligand for CD209/DC-SIGN and CLEC4M/DC-SIGNR, which are respectively found on dendritic cells (DCs), and on liver sinusoidal endothelial cells and macrophage-like cells of lymph node sinuses. These interactions allow the capture of circulating HCV particles by these cells and subsequent facilitated transmission to permissive cells such as hepatocytes and lymphocyte subpopulations. The interaction between E2 and host amino acid transporter complex formed by SLC3A2 and SLC7A5/LAT1 may facilitate viral entry into host cell. Ion channel protein that acts as a viroporin and plays an essential role in the assembly, envelopment and secretion of viral particles. Regulates the host cell secretory pathway, which induces the intracellular retention of viral glycoproteins and favors assembly of viral particles. Creates a pore in acidic organelles and releases Ca(2+) and H(+) in the cytoplasm of infected cells, leading to a productive viral infection. High levels of cytoplasmic Ca(2+) may trigger membrane trafficking and transport of viral ER-associated proteins to viroplasms, sites of viral genome replication. This ionic imbalance induces the assembly of the inflammasome complex, which triggers the maturation of pro-IL-1beta into IL-1beta through the action of caspase-1. Targets also host mitochondria and induces mitochondrial depolarization. In addition of its role as a viroporin, acts as a lipid raft adhesion factor. Its function is as follows. Cysteine protease required for the proteolytic auto-cleavage between the non-structural proteins NS2 and NS3. The N-terminus of NS3 is required for the function of NS2 protease (active region NS2-3). Promotes the initiation of viral particle assembly by mediating the interaction between structural and non-structural proteins. In terms of biological role, displays three enzymatic activities: serine protease with a chymotrypsin-like fold, NTPase and RNA helicase. NS3 serine protease, in association with NS4A, is responsible for the cleavages of NS3-NS4A, NS4A-NS4B, NS4B-NS5A and NS5A-NS5B. The NS3/NS4A complex prevents phosphorylation of host IRF3, thus preventing the establishment of dsRNA induced antiviral state. The NS3/NS4A complex induces host amino acid transporter component SLC3A2, thus contributing to HCV propagation. NS3 RNA helicase binds to RNA and unwinds both dsDNA and dsRNA in the 3' to 5' direction, and likely resolves RNA complicated stable secondary structures in the template strand. Binds a single ATP and catalyzes the unzipping of a single base pair of dsRNA. Inhibits host antiviral proteins TBK1 and IRF3 thereby preventing the establishment of an antiviral state. Cleaves host MAVS/CARDIF thereby preventing the establishment of an antiviral state. Cleaves host TICAM1/TRIF, thereby disrupting TLR3 signaling and preventing the establishment of an antiviral state. Functionally, induces a specific membrane alteration that serves as a scaffold for the virus replication complex. This membrane alteration gives rise to the so-called ER-derived membranous web that contains the replication complex. NS4B self-interaction contributes to its function in membranous web formation. Promotes host TRIF protein degradation in a CASP8-dependent manner thereby inhibiting host TLR3-mediated interferon signaling. Disrupts the interaction between STING and TBK1 contributing to the inhibition of interferon signaling. Phosphorylated protein that is indispensable for viral replication and assembly. Both hypo- and hyperphosphorylated states are required for the viral life cycle. The hyperphosphorylated form of NS5A is an inhibitor of viral replication. Involved in RNA-binding and especially in binding to the viral genome. Zinc is essential for RNA-binding. Participates in the viral particle production as a result of its interaction with the mature viral core protein. Its interaction with host VAPB may target the viral replication complex to vesicles. Down-regulates viral IRES translation initiation. Mediates interferon resistance, presumably by interacting with and inhibiting host EIF2AK2/PKR. Prevents BIN1-induced apoptosis. Acts as a transcriptional activator of some host genes important for viral replication when localized in the nucleus. Via the interaction with host PACSIN2, modulates lipid droplet formation in order to promote virion assembly. Modulates TNFRSF21/DR6 signaling pathway for viral propagation. Its function is as follows. RNA-dependent RNA polymerase that performs primer-template recognition and RNA synthesis during viral replication. Initiates RNA transcription/replication at a flavin adenine dinucleotide (FAD), resulting in a 5'- FAD cap on viral RNAs. In this way, recognition of viral 5' RNA by host pattern recognition receptors can be bypassed, thereby evading activation of antiviral pathways. The polypeptide is Genome polyprotein (Hepatitis C virus genotype 2b (isolate JPUT971017) (HCV)).